The primary structure comprises 509 residues: Light-independent protochlorophyllide reductase subunit B (509 aa).

D36 serves as a coordination point for [4Fe-4S] cluster. D298 functions as the Proton donor in the catalytic mechanism. Residue 433-434 (GM) participates in substrate binding.

This sequence belongs to the ChlB/BchB/BchZ family. Protochlorophyllide reductase is composed of three subunits; ChlL, ChlN and ChlB. Forms a heterotetramer of two ChlB and two ChlN subunits. The cofactor is [4Fe-4S] cluster.

The protein resides in the plastid. Its subcellular location is the chloroplast. It carries out the reaction chlorophyllide a + oxidized 2[4Fe-4S]-[ferredoxin] + 2 ADP + 2 phosphate = protochlorophyllide a + reduced 2[4Fe-4S]-[ferredoxin] + 2 ATP + 2 H2O. It participates in porphyrin-containing compound metabolism; chlorophyll biosynthesis (light-independent). Functionally, component of the dark-operative protochlorophyllide reductase (DPOR) that uses Mg-ATP and reduced ferredoxin to reduce ring D of protochlorophyllide (Pchlide) to form chlorophyllide a (Chlide). This reaction is light-independent. The NB-protein (ChlN-ChlB) is the catalytic component of the complex. This chain is Light-independent protochlorophyllide reductase subunit B, found in Ephedra altissima (High-climbing jointfir).